Consider the following 280-residue polypeptide: Large ribosomal subunit protein uL2 (280 aa).

2 disordered regions span residues 27 to 59 (STPEKSLVRPLHGRGGRNAHGRITTRHKGGGHK) and 225 to 280 (VMNP…KHSR). 2 stretches are compositionally biased toward basic residues: residues 37–59 (LHGRGGRNAHGRITTRHKGGGHK) and 268–280 (IVRRRRTGKKHSR).

It belongs to the universal ribosomal protein uL2 family. As to quaternary structure, part of the 50S ribosomal subunit. Forms a bridge to the 30S subunit in the 70S ribosome.

Its function is as follows. One of the primary rRNA binding proteins. Required for association of the 30S and 50S subunits to form the 70S ribosome, for tRNA binding and peptide bond formation. It has been suggested to have peptidyltransferase activity; this is somewhat controversial. Makes several contacts with the 16S rRNA in the 70S ribosome. The protein is Large ribosomal subunit protein uL2 of Mycobacterium bovis (strain ATCC BAA-935 / AF2122/97).